Reading from the N-terminus, the 898-residue chain is Sodium/hydrogen exchanger 5 (898 aa).

Topologically, residues M1–E48 are cytoplasmic. Residues A49–L69 traverse the membrane as a helical segment. The Extracellular segment spans residues S70 to L76. Residues V77 to V97 form a helical membrane-spanning segment. Topologically, residues A98–E106 are cytoplasmic. A helical transmembrane segment spans residues P107–P127. At S128 to A137 the chain is on the extracellular side. A helical membrane pass occupies residues I138 to W158. The Cytoplasmic portion of the chain corresponds to G159–D176. Residues F177 to E197 form a helical membrane-spanning segment. Topologically, residues E198–Q203 are extracellular. The chain crosses the membrane as a helical span at residues T204–Y224. Topologically, residues K225–S249 are cytoplasmic. Residues L250–L270 form a helical membrane-spanning segment. Residues T271–R279 are Extracellular-facing. The chain crosses the membrane as a helical span at residues I280–A300. The Cytoplasmic segment spans residues S301–T334. Residues M335 to V355 form a helical membrane-spanning segment. At D356–D363 the chain is on the extracellular side. The helical transmembrane segment at S364–L384 threads the bilayer. At Q385 to D401 the chain is on the cytoplasmic side. Residues Q402–L422 traverse the membrane as a helical segment. Over D423–D431 the chain is Extracellular. The chain crosses the membrane as a helical span at residues Y432–I452. The Cytoplasmic portion of the chain corresponds to K453–L898. Disordered regions lie at residues F660–G693 and E826–E866. The segment covering S663–K675 has biased composition (basic residues). Positions E857–E866 are enriched in polar residues.

It belongs to the monovalent cation:proton antiporter 1 (CPA1) transporter (TC 2.A.36) family. In terms of assembly, interacts with CHP1 and CHP2. Interacts with ARRB2; facilitates the endocytosis of SLC9A5 from the plasma membrane. Interacts with RACK1; this interaction positively regulates SLC9A5 activity and promote SLC9A5 localization to focal adhesions. Interacts with SCAMP2; this interaction regulates SLC9A5 cell-surface targeting and SLC9A5 activity. Phosphorylated by PRKAA2; promotes its accumulation at the cell surface. Phosphorylated by CSNK2A1 in a manner favoring its beta-arrestin binding and endocytosis. Highest expression level is detected in brain. Expressed in hippocampal neurons (at protein level).

The protein localises to the cell membrane. Its subcellular location is the recycling endosome membrane. It is found in the cell projection. The protein resides in the dendritic spine membrane. It localises to the synaptic cell membrane. The protein localises to the cell junction. Its subcellular location is the focal adhesion. The enzyme catalyses Na(+)(in) + H(+)(out) = Na(+)(out) + H(+)(in). Functionally, plasma membrane Na(+)/H(+) antiporter. Mediates the electroneutral exchange of intracellular H(+) ions for extracellular Na(+) in 1:1 stoichiometry. Responsible for regulating intracellular pH homeostasis, in particular in neural tissues. Acts as a negative regulator of dendritic spine growth. Plays a role in postsynaptic remodeling and signaling. Can also contribute to organellar pH regulation, with consequences for receptor tyrosine kinase trafficking. The sequence is that of Sodium/hydrogen exchanger 5 (Slc9a5) from Mus musculus (Mouse).